The sequence spans 97 residues: MTDLRHYDVIVSPSITEKSTLVSEQNQVVFNVAKGASKPEIKAAVEALFGVKVTAVNTLVRKGKLKRFRGFAGKQKDVKKAIVTLADGQSIDVSTGL.

The protein belongs to the universal ribosomal protein uL23 family. As to quaternary structure, part of the 50S ribosomal subunit. Contacts protein L29, and trigger factor when it is bound to the ribosome.

Its function is as follows. One of the early assembly proteins it binds 23S rRNA. One of the proteins that surrounds the polypeptide exit tunnel on the outside of the ribosome. Forms the main docking site for trigger factor binding to the ribosome. This is Large ribosomal subunit protein uL23 from Sinorhizobium medicae (strain WSM419) (Ensifer medicae).